We begin with the raw amino-acid sequence, 210 residues long: NADH dehydrogenase [ubiquinone] iron-sulfur protein 8, mitochondrial (210 aa).

Residues 1–34 (MRCLTTPMLLRALAQAARAGPPGGRSLHSSAVAA) constitute a mitochondrion transit peptide. 4Fe-4S ferredoxin-type domains lie at 102-131 (RRYPSGEERCIACKLCEAICPAQAITIEAE) and 141-170 (TRYDIDMTKCIYCGFCQEACPVDAIVEGPN). [4Fe-4S] cluster contacts are provided by Cys-111, Cys-114, Cys-117, Cys-121, Cys-150, Cys-153, Cys-156, and Cys-160.

It belongs to the complex I 23 kDa subunit family. As to quaternary structure, core subunit of respiratory chain NADH dehydrogenase (Complex I) which is composed of 45 different subunits. This is a component of the iron-sulfur (IP) fragment of the enzyme. Interacts with RAB5IF. Requires [4Fe-4S] cluster as cofactor. In terms of tissue distribution, expressed in all tissues with the highest level in heart and skeletal muscle and the lowest level in lung.

It localises to the mitochondrion inner membrane. It catalyses the reaction a ubiquinone + NADH + 5 H(+)(in) = a ubiquinol + NAD(+) + 4 H(+)(out). Functionally, core subunit of the mitochondrial membrane respiratory chain NADH dehydrogenase (Complex I) which catalyzes electron transfer from NADH through the respiratory chain, using ubiquinone as an electron acceptor. Essential for the catalytic activity and assembly of complex I. The protein is NADH dehydrogenase [ubiquinone] iron-sulfur protein 8, mitochondrial (NDUFS8) of Homo sapiens (Human).